The following is a 181-amino-acid chain: Isopentenyl-diphosphate Delta-isomerase (181 aa).

The Mn(2+) site is built by histidine 25 and histidine 32. The Nudix hydrolase domain maps to 30–164 (LLHLAFSCWL…PWAFSPWMVL (135 aa)). The active site involves cysteine 67. Histidine 69 provides a ligand contact to Mn(2+). Glutamate 87 is a Mg(2+) binding site. Mn(2+) is bound by residues glutamate 114 and glutamate 116. Glutamate 116 is an active-site residue.

The protein belongs to the IPP isomerase type 1 family. As to quaternary structure, homodimer. Mg(2+) is required as a cofactor. Requires Mn(2+) as cofactor.

The protein resides in the cytoplasm. The enzyme catalyses isopentenyl diphosphate = dimethylallyl diphosphate. The protein operates within isoprenoid biosynthesis; dimethylallyl diphosphate biosynthesis; dimethylallyl diphosphate from isopentenyl diphosphate: step 1/1. Functionally, catalyzes the 1,3-allylic rearrangement of the homoallylic substrate isopentenyl (IPP) to its highly electrophilic allylic isomer, dimethylallyl diphosphate (DMAPP). The sequence is that of Isopentenyl-diphosphate Delta-isomerase from Citrobacter koseri (strain ATCC BAA-895 / CDC 4225-83 / SGSC4696).